A 1204-amino-acid polypeptide reads, in one-letter code: ATP-dependent helicase/nuclease subunit A (1204 aa).

The 468-residue stretch at 2–469 (TKFTKEQNQA…IVLSDNFRST (468 aa)) folds into the UvrD-like helicase ATP-binding domain. An ATP-binding site is contributed by 23 to 30 (ASAGSGKT). A UvrD-like helicase C-terminal domain is found at 496–784 (EGQLQFGATY…KLMTIHASKG (289 aa)).

Belongs to the helicase family. AddA subfamily. As to quaternary structure, heterodimer of AddA and AddB/RexB. The cofactor is Mg(2+).

It catalyses the reaction Couples ATP hydrolysis with the unwinding of duplex DNA by translocating in the 3'-5' direction.. The catalysed reaction is ATP + H2O = ADP + phosphate + H(+). The heterodimer acts as both an ATP-dependent DNA helicase and an ATP-dependent, dual-direction single-stranded exonuclease. Recognizes the chi site generating a DNA molecule suitable for the initiation of homologous recombination. The AddA nuclease domain is required for chi fragment generation; this subunit has the helicase and 3' -&gt; 5' nuclease activities. This chain is ATP-dependent helicase/nuclease subunit A, found in Lactobacillus johnsonii (strain CNCM I-12250 / La1 / NCC 533).